We begin with the raw amino-acid sequence, 221 residues long: Octanoyltransferase (221 aa).

A BPL/LPL catalytic domain is found at 35–221; the sequence is ESYENRIIFC…RELLAALLSK (187 aa). Substrate contacts are provided by residues 80–87, 152–154, and 165–167; these read RGGDITYH, AIG, and GLA. The active-site Acyl-thioester intermediate is the cysteine 183.

This sequence belongs to the LipB family.

It is found in the cytoplasm. The catalysed reaction is octanoyl-[ACP] + L-lysyl-[protein] = N(6)-octanoyl-L-lysyl-[protein] + holo-[ACP] + H(+). The protein operates within protein modification; protein lipoylation via endogenous pathway; protein N(6)-(lipoyl)lysine from octanoyl-[acyl-carrier-protein]: step 1/2. In terms of biological role, catalyzes the transfer of endogenously produced octanoic acid from octanoyl-acyl-carrier-protein onto the lipoyl domains of lipoate-dependent enzymes. Lipoyl-ACP can also act as a substrate although octanoyl-ACP is likely to be the physiological substrate. The polypeptide is Octanoyltransferase (Bacteroides fragilis (strain ATCC 25285 / DSM 2151 / CCUG 4856 / JCM 11019 / LMG 10263 / NCTC 9343 / Onslow / VPI 2553 / EN-2)).